The primary structure comprises 446 residues: N-succinylarginine dihydrolase (446 aa).

Substrate-binding positions include 19–28 (AGLSFGNVAS), Asn110, and 137–138 (HR). Glu174 is an active-site residue. Arg213 serves as a coordination point for substrate. His249 is a catalytic residue. Substrate-binding residues include Asp251 and Asn364. Residue Cys370 is the Nucleophile of the active site.

This sequence belongs to the succinylarginine dihydrolase family. As to quaternary structure, homodimer.

It catalyses the reaction N(2)-succinyl-L-arginine + 2 H2O + 2 H(+) = N(2)-succinyl-L-ornithine + 2 NH4(+) + CO2. Its pathway is amino-acid degradation; L-arginine degradation via AST pathway; L-glutamate and succinate from L-arginine: step 2/5. In terms of biological role, catalyzes the hydrolysis of N(2)-succinylarginine into N(2)-succinylornithine, ammonia and CO(2). This chain is N-succinylarginine dihydrolase, found in Burkholderia cenocepacia (strain HI2424).